The chain runs to 94 residues: Sapecin (94 aa).

An N-terminal signal peptide occupies residues 1 to 23 (MKSFIVLAVTLCLAAFFMGQSVA). The propeptide occupies 24-54 (SPAAAAEESKFVDGLHALKTIEPELHGRYKR). 3 disulfides stabilise this stretch: Cys-57-Cys-84, Cys-70-Cys-90, and Cys-74-Cys-92.

This sequence belongs to the invertebrate defensin family. Type 1 subfamily. As to expression, hemocytes and fat body.

The protein resides in the secreted. Functionally, sapecins, which are potent bactericidal proteins, are produced in response to injury. Sapecin is cytotoxic to Gram-positive bacteria, and to a lesser extent against Gram-negative bacteria. This is Sapecin from Sarcophaga peregrina (Flesh fly).